The sequence spans 204 residues: Thymidylate kinase (204 aa).

Residue 11-18 participates in ATP binding; that stretch reads GIDGAGKS.

The protein belongs to the thymidylate kinase family.

It catalyses the reaction dTMP + ATP = dTDP + ADP. Functionally, phosphorylation of dTMP to form dTDP in both de novo and salvage pathways of dTTP synthesis. This is Thymidylate kinase from Janthinobacterium sp. (strain Marseille) (Minibacterium massiliensis).